Reading from the N-terminus, the 211-residue chain is 5-formyltetrahydrofolate cyclo-ligase (211 aa).

4 to 8 (KQLLR) contributes to the ATP binding site. Residues Glu-56 and 152 to 156 (HGAGY) contribute to the substrate site. ATP is bound by residues 151-158 (GHGAGYYD) and Asp-194.

It belongs to the 5-formyltetrahydrofolate cyclo-ligase family. Post-translationally, N-glycosylated.

It is found in the mitochondrion. The catalysed reaction is (6S)-5-formyl-5,6,7,8-tetrahydrofolate + ATP = (6R)-5,10-methenyltetrahydrofolate + ADP + phosphate. Its function is as follows. Only enzyme known to utilize 5-formyltetrahydrofolate (folinic acid) as substrate. Contributes to tetrahydrofolate metabolism in an alternative way of folate biosynthesis. May regulate carbon flow through the folate-dependent one-carbon metabolic network that supplies carbon for the biosynthesis of purines, thymidine and amino acids. The protein is 5-formyltetrahydrofolate cyclo-ligase (FAU1) of Saccharomyces cerevisiae (strain ATCC 204508 / S288c) (Baker's yeast).